The following is an 891-amino-acid chain: Protein translocase subunit SecA 1 (891 aa).

ATP is bound by residues Q85, 103 to 107, and D491; that span reads GEGKT. 4 residues coordinate Zn(2+): C877, C879, C888, and C889.

Belongs to the SecA family. As to quaternary structure, monomer and homodimer. Part of the essential Sec protein translocation apparatus which comprises SecA, SecYEG and auxiliary proteins SecDF. Other proteins may also be involved. Zn(2+) is required as a cofactor.

Its subcellular location is the cell membrane. The protein resides in the cytoplasm. The catalysed reaction is ATP + H2O + cellular proteinSide 1 = ADP + phosphate + cellular proteinSide 2.. Its function is as follows. Part of the Sec protein translocase complex. Interacts with the SecYEG preprotein conducting channel. Has a central role in coupling the hydrolysis of ATP to the transfer of proteins into and across the cell membrane, serving as an ATP-driven molecular motor driving the stepwise translocation of polypeptide chains across the membrane. This is Protein translocase subunit SecA 1 from Clostridioides difficile (strain 630) (Peptoclostridium difficile).